The chain runs to 646 residues: Threonine--tRNA ligase (646 aa).

A TGS domain is found at 1 to 63 (MADLSIIFPD…SSGGSIEIIT (63 aa)). Residues 244–541 (DHRKLGKELG…LIEEYKGAFP (298 aa)) are catalytic. Positions 337, 388, and 518 each coordinate Zn(2+).

Belongs to the class-II aminoacyl-tRNA synthetase family. As to quaternary structure, homodimer. Requires Zn(2+) as cofactor.

The protein resides in the cytoplasm. It catalyses the reaction tRNA(Thr) + L-threonine + ATP = L-threonyl-tRNA(Thr) + AMP + diphosphate + H(+). Its function is as follows. Catalyzes the attachment of threonine to tRNA(Thr) in a two-step reaction: L-threonine is first activated by ATP to form Thr-AMP and then transferred to the acceptor end of tRNA(Thr). Also edits incorrectly charged L-seryl-tRNA(Thr). This Oceanobacillus iheyensis (strain DSM 14371 / CIP 107618 / JCM 11309 / KCTC 3954 / HTE831) protein is Threonine--tRNA ligase.